The following is a 360-amino-acid chain: Threonine synthase (360 aa).

At K69 the chain carries N6-(pyridoxal phosphate)lysine. Pyridoxal 5'-phosphate is bound by residues N95, 196–200 (GNAGN), and T326.

The protein belongs to the threonine synthase family. In terms of assembly, homodimer. Requires pyridoxal 5'-phosphate as cofactor.

It carries out the reaction O-phospho-L-homoserine + H2O = L-threonine + phosphate. The protein operates within amino-acid biosynthesis; L-threonine biosynthesis; L-threonine from L-aspartate: step 5/5. Its function is as follows. Catalyzes the gamma-elimination of phosphate from L-phosphohomoserine and the beta-addition of water to produce L-threonine. In Mycobacterium bovis (strain ATCC BAA-935 / AF2122/97), this protein is Threonine synthase (thrC).